The following is a 657-amino-acid chain: Oleate activated transcription factor 3 (657 aa).

The zn(2)-C6 fungal-type DNA-binding region spans 21–48 (CLNCRRRKTKCDRGKPSCSNCLKLGETC).

Belongs to the OAF3 family.

The protein resides in the cytoplasm. It is found in the nucleus. Its subcellular location is the mitochondrion. In terms of biological role, transcriptional inhibitor with a significantly increased number of target genes in response to oleate. The chain is Oleate activated transcription factor 3 (OAF3) from Kluyveromyces lactis (strain ATCC 8585 / CBS 2359 / DSM 70799 / NBRC 1267 / NRRL Y-1140 / WM37) (Yeast).